We begin with the raw amino-acid sequence, 199 residues long: uncharacterized protein (199 aa).

The segment at 1-41 (MKFKRDENQNSTHHRGNKNNTNNDDDDKEEEEEIINDTTMP) is disordered. Positions 23 to 35 (NDDDDKEEEEEII) are enriched in acidic residues. The next 3 helical transmembrane spans lie at 73-93 (LILD…FAFW), 96-116 (ISTY…VSFL), and 166-186 (IAIA…SPYL).

It is found in the membrane. This is an uncharacterized protein from Dictyostelium discoideum (Social amoeba).